The chain runs to 412 residues: 5,5'-dehydrodivanillate O-demethylase ferredoxin reductase subunit (412 aa).

6 residues coordinate FAD: Ala-14, Lys-49, Val-82, Arg-130, Asp-279, and Val-298.

It belongs to the FAD-dependent oxidoreductase family. In terms of assembly, monomer. The three-component monooxygenase is composed of an oxygenase (LigXa), a ferredoxin (LigXc) and a ferredoxin reductase (LigXd). Requires FAD as cofactor.

The catalysed reaction is 5,5'-dehydrodivanillate + NADH + O2 + H(+) = 2,2',3-trihydroxy-3'-methoxy-5,5'-dicarboxybiphenyl + formaldehyde + NAD(+) + H2O. Functionally, involved in the catabolism of 5,5'-dehydrodivanillate (DDVA), an intermediate in the biodegradation of lignin. Part of a three-component monooxygenase that catalyzes the O-demethylation of DDVA, leading to the formation of 2,2',3-trihydroxy-3'-methoxy-5,5'-dicarboxybiphenyl (OH-DDVA). LigXd probably transfers the electrons from NADH to LigXc. The chain is 5,5'-dehydrodivanillate O-demethylase ferredoxin reductase subunit from Sphingobium sp. (strain NBRC 103272 / SYK-6).